The following is a 761-amino-acid chain: Nitrogen fixation protein FixI (761 aa).

The Cytoplasmic segment spans residues 1-120 (MSCCTMDAES…SAPESDKTRN (120 aa)). An HMA domain is found at 36-106 (RQLDLSVSDV…EINSAGYRAH (71 aa)). The a metal cation site is built by Cys-47 and Cys-50. The chain crosses the membrane as a helical span at residues 121–142 (QLLLAIGVSGFAAPNIMLLSVS). Topologically, residues 143 to 155 (VWSGADAATRDMF) are extracellular. Residues 156–177 (HWISAMIAAPALVYAGRFFFKS) form a helical membrane-spanning segment. The Cytoplasmic portion of the chain corresponds to 178-184 (AWNALRH). The helical transmembrane segment at 185–205 (GRTNMDVPISVTVSLSYAVSL) threads the bilayer. Residues 206-217 (WETVHHGEHAWF) lie on the Extracellular side of the membrane. A helical membrane pass occupies residues 218–238 (DASVSLLFFLLIGRTLDHIMR). Residues 239–367 (EKARAAINGL…RARYRRIADR (129 aa)) lie on the Cytoplasmic side of the membrane. Residues 368–390 (AATLYSPVVHLLALVSFLAWGFL) traverse the membrane as a helical segment. Residues 391 to 395 (GGDWK) are Extracellular-facing. A helical membrane pass occupies residues 396–415 (QAMLVAVAVLIITCPCALGL). Residues 416–691 (AVPVVQVVAA…AVARRSASLI (276 aa)) are Cytoplasmic-facing. Asp-453 serves as the catalytic 4-aspartylphosphate intermediate. Mg(2+)-binding residues include Asp-637 and Asp-641. Residues 692–711 (RQNFALAIGYNVLAVPIAIA) traverse the membrane as a helical segment. Topologically, residues 712–716 (GLATP) are extracellular. A helical membrane pass occupies residues 717–735 (LIAAVAMSTSSIIVVTNAL). Topologically, residues 736–761 (RLNGFGKRPDMHIRRGIGRSAEVKAA) are cytoplasmic.

This sequence belongs to the cation transport ATPase (P-type) (TC 3.A.3) family. Type IB subfamily.

The protein resides in the cell membrane. The catalysed reaction is ATP + H2O = ADP + phosphate + H(+). Functionally, fixI is a pump of a specific cation involved in symbiotic nitrogen fixation. The four proteins FixG, FixH, FixI, and FixS may participate in a membrane-bound complex coupling the FixI cation pump with a redox process catalyzed by FixG. In Rhizobium leguminosarum bv. viciae, this protein is Nitrogen fixation protein FixI (fixI).